A 294-amino-acid polypeptide reads, in one-letter code: UDP-3-O-acyl-N-acetylglucosamine deacetylase (294 aa).

3 residues coordinate Zn(2+): His75, His232, and Asp236. The active-site Proton donor is the His259.

Belongs to the LpxC family. The cofactor is Zn(2+).

The enzyme catalyses a UDP-3-O-[(3R)-3-hydroxyacyl]-N-acetyl-alpha-D-glucosamine + H2O = a UDP-3-O-[(3R)-3-hydroxyacyl]-alpha-D-glucosamine + acetate. It participates in glycolipid biosynthesis; lipid IV(A) biosynthesis; lipid IV(A) from (3R)-3-hydroxytetradecanoyl-[acyl-carrier-protein] and UDP-N-acetyl-alpha-D-glucosamine: step 2/6. Functionally, catalyzes the hydrolysis of UDP-3-O-myristoyl-N-acetylglucosamine to form UDP-3-O-myristoylglucosamine and acetate, the committed step in lipid A biosynthesis. In Sulfurimonas denitrificans (strain ATCC 33889 / DSM 1251) (Thiomicrospira denitrificans (strain ATCC 33889 / DSM 1251)), this protein is UDP-3-O-acyl-N-acetylglucosamine deacetylase.